A 229-amino-acid chain; its full sequence is MGDPNSRKKQALNRLRAQLRKKKESLADQFDFKMYIAFVFKEKKKKSALFEVSEVIPVMTNNYEENILKGVRDSSYSLESSLELLQKDVVQLHAPRYQSMRRDVIGCTQEMDFILWPRNDIEKIVCLLFSRWKESDEPFRPVQAKFEFHHGDYEKQFLHVLSRKDKTGIVVNNPNQSVFLFIDRQHLQTPKNKATIFKLCSICLYLPQEQLTHWAVGTIEDHLRPYMPE.

This is an uncharacterized protein from Mus musculus (Mouse).